A 319-amino-acid polypeptide reads, in one-letter code: HTH-type transcriptional regulator YidZ (319 aa).

One can recognise an HTH lysR-type domain in the interval 8–65 (LDLNLLLCLQLLMQERSVTKAAKRINVTPSAVSKSLAKLRAWFDDPLFVNSPLGLSPT). A DNA-binding region (H-T-H motif) is located at residues 25 to 44 (VTKAAKRINVTPSAVSKSLA).

This sequence belongs to the LysR transcriptional regulatory family.

Functionally, involved in anaerobic NO protection. This chain is HTH-type transcriptional regulator YidZ, found in Escherichia coli (strain K12 / MC4100 / BW2952).